A 520-amino-acid polypeptide reads, in one-letter code: Peptide chain release factor 3 (520 aa).

The tr-type G domain maps to 8–277; the sequence is ESRKTFAIIS…FAPMPNARQT (270 aa). GTP contacts are provided by residues 17–24, 85–89, and 139–142; these read SHPDAGKT, DTPGH, and NKLD.

The protein belongs to the TRAFAC class translation factor GTPase superfamily. Classic translation factor GTPase family. PrfC subfamily.

Its subcellular location is the cytoplasm. Its function is as follows. Increases the formation of ribosomal termination complexes and stimulates activities of RF-1 and RF-2. It binds guanine nucleotides and has strong preference for UGA stop codons. It may interact directly with the ribosome. The stimulation of RF-1 and RF-2 is significantly reduced by GTP and GDP, but not by GMP. The chain is Peptide chain release factor 3 from Staphylococcus aureus (strain JH1).